Consider the following 387-residue polypeptide: Phosphoglycerate kinase (387 aa).

Residues 21–23 (DLN), Arg-36, 59–62 (HLGR), Arg-113, and Arg-146 each bind substrate. ATP contacts are provided by residues Lys-197, Glu-314, and 340–343 (GGDT).

This sequence belongs to the phosphoglycerate kinase family. Monomer.

Its subcellular location is the cytoplasm. The enzyme catalyses (2R)-3-phosphoglycerate + ATP = (2R)-3-phospho-glyceroyl phosphate + ADP. The protein operates within carbohydrate degradation; glycolysis; pyruvate from D-glyceraldehyde 3-phosphate: step 2/5. In Aeromonas salmonicida (strain A449), this protein is Phosphoglycerate kinase.